Here is a 171-residue protein sequence, read N- to C-terminus: ATP synthase subunit b (171 aa).

A helical membrane pass occupies residues 3–23 (KFLFFIFVFVGISFAGDDTAT).

This sequence belongs to the ATPase B chain family. As to quaternary structure, F-type ATPases have 2 components, F(1) - the catalytic core - and F(0) - the membrane proton channel. F(1) has five subunits: alpha(3), beta(3), gamma(1), delta(1), epsilon(1). F(0) has three main subunits: a(1), b(2) and c(10-14). The alpha and beta chains form an alternating ring which encloses part of the gamma chain. F(1) is attached to F(0) by a central stalk formed by the gamma and epsilon chains, while a peripheral stalk is formed by the delta and b chains.

The protein localises to the cell inner membrane. In terms of biological role, f(1)F(0) ATP synthase produces ATP from ADP in the presence of a proton or sodium gradient. F-type ATPases consist of two structural domains, F(1) containing the extramembraneous catalytic core and F(0) containing the membrane proton channel, linked together by a central stalk and a peripheral stalk. During catalysis, ATP synthesis in the catalytic domain of F(1) is coupled via a rotary mechanism of the central stalk subunits to proton translocation. Functionally, component of the F(0) channel, it forms part of the peripheral stalk, linking F(1) to F(0). The polypeptide is ATP synthase subunit b (Campylobacter hominis (strain ATCC BAA-381 / DSM 21671 / CCUG 45161 / LMG 19568 / NCTC 13146 / CH001A)).